The primary structure comprises 160 residues: Interleukin-36 alpha (160 aa).

Residues 1–7 constitute a propeptide that is removed on maturation; it reads MNKEKEL. The residue at position 98 (tyrosine 98) is a 3'-nitrotyrosine.

This sequence belongs to the IL-1 family. Interacts with TMED10; the interaction mediates the translocation from the cytoplasm into the ERGIC (endoplasmic reticulum-Golgi intermediate compartment) and thereby secretion. In terms of processing, N-terminal truncation leads to a dramatic enhancement of its activity (&gt;1000-fold). Highly expressed in embryonic tissue and in tissues containing epithelial cells. Elevated expression levels are detected in chronic kidney disease; expressed inepithelia from the distal convoluted tubules (DCTs) to the cortical collecting ducts (CCDs) in single nephrons (at protein level).

It localises to the cytoplasm. Its subcellular location is the secreted. Functionally, cytokine that binds to and signals through the IL1RL2/IL-36R receptor which in turn activates NF-kappa-B and MAPK signaling pathways in target cells linked to a pro-inflammatory response. Part of the IL-36 signaling system that is thought to be present in epithelial barriers and to take part in local inflammatory response; similar to the IL-1 system with which it shares the coreceptor IL1RAP. Seems to be involved in skin inflammatory response by acting on keratinocytes, dendritic cells and indirectly on T-cells to drive tissue infiltration, cell maturation and cell proliferation. Induces the production of pro-inflammatory cytokines, including IL-12, Il-1 beta, IL-6, TNF-alpha and IL-23 in bone marrow-derived dendritic cells (BMDCs). Involved in dendritic cell maturation by stimulating the surface expression of CD80, CD86 and MHC class II. Induces the production of IFN-gamma, IL-4 and IL-17 by cultured CD4(+) T-cells and splenocytes. May play a role in pro-inflammatory effects in the lung: induces the expression of CXCL1 and CXCL2 in the lung, and the expression of TNF-alpha, IL-36c, IL-1A, IL-1B, CXCL1 and CXCL2 in isolated splenic CD11c(+) alveolar macrophages. May be involved in T-cell maturation by stimulating the surface expression of CD40 and modestly CD80 and CD86 in splenic CD11c(+) cells. May be involved in CD4(+) T-cell proliferation. Induces NF-kappa B activation in macrophages. The chain is Interleukin-36 alpha from Mus musculus (Mouse).